Reading from the N-terminus, the 222-residue chain is Eukaryotic translation initiation factor 4E-1 (222 aa).

Residues 1-22 (MVDEVEKPASLEESKTNTREVE) show a composition bias toward basic and acidic residues. A disordered region spans residues 1–37 (MVDEVEKPASLEESKTNTREVEEGAEEVIESDDTMSS). The span at 23–33 (EGAEEVIESDD) shows a compositional bias: acidic residues. EIF4G-binding stretches follow at residues 47 to 50 (HPLE) and 57 to 93 (FDNP…NNIH). MRNA-binding positions include 65–70 (KQAAWG), K97, and 115–116 (WE). The cysteines at positions 120 and 158 are disulfide-linked. Residues 141–150 (YTLLAMIGEQ) are EIF4G-binding. Residues 165 to 170 (RVRQEK) and 210 to 214 (KKLDR) contribute to the mRNA site.

It belongs to the eukaryotic initiation factor 4E family. As to quaternary structure, EIF4F is a multi-subunit complex, the composition of which varies with external and internal environmental conditions. It is composed of at least EIF4A, EIF4E and EIF4G. EIF4E is also known to interact with other partners. In higher plants two isoforms of EIF4F have been identified, named isoform EIF4F and isoform EIF(iso)4F. Isoform EIF4F has subunits p220 and p26, whereas isoform EIF(iso)4F has subunits p82 and p28. Post-translationally, according to the redox status, the Cys-120-Cys-158 disulfide bridge may have a role in regulating protein function by affecting its ability to bind capped mRNA. Expressed ubiquitously in seedlings, roots, leaves, sepals, petals, anthers and dehisced pollen, with highest levels in pollen, maturing anthers and roots. Strongly expressed in susceptible plants but not in resistant ones.

Its subcellular location is the nucleus. It is found in the cytoplasm. Component of the protein complex eIF4F, which is involved in the recognition of the mRNA cap, ATP-dependent unwinding of 5'-terminal secondary structure and recruitment of mRNA to the ribosome. Recognizes and binds the 7-methylguanosine-containing mRNA cap during an early step in the initiation of protein synthesis and facilitates ribosome binding by inducing the unwinding of the mRNAs secondary structures. Key component of recessive resistance to potyviruses. In terms of biological role, (Microbial infection) Susceptibility host factor required for viral infection (e.g. potato virus Y (PVY) and pepper mottle virus (PepMoV)) by recruiting viral RNAs to the host ribosomal complex via an interaction with viral genome-linked protein (VPg). This chain is Eukaryotic translation initiation factor 4E-1, found in Nicotiana tabacum (Common tobacco).